Consider the following 60-residue polypeptide: MTTQQTIKIQLVRSPIGTKESHRATVRGLGLRKLNSISELKDTPEVRGMINKISYLVKVL.

The protein belongs to the universal ribosomal protein uL30 family. Part of the 50S ribosomal subunit.

The sequence is that of Large ribosomal subunit protein uL30 from Acidovorax ebreus (strain TPSY) (Diaphorobacter sp. (strain TPSY)).